The primary structure comprises 298 residues: Probable tRNA(His) guanylyltransferase (298 aa).

Asp-58, Gly-59, and Asp-105 together coordinate Mg(2+). Residues 58–63 (DGRNFH) and 104–105 (SD) each bind GTP.

Belongs to the tRNA(His) guanylyltransferase family. As to quaternary structure, homotetramer. Interacts with MFN1 and MFN2; functions as a guanyl-nucleotide exchange factor/GEF for MFN2 and also probably MFN1. Mg(2+) serves as cofactor.

Its subcellular location is the cytoplasm. It is found in the mitochondrion. The catalysed reaction is a 5'-end ribonucleotide-tRNA(His) + GTP + ATP + H2O = a 5'-end phospho-guanosine-ribonucleotide-tRNA(His) + AMP + 2 diphosphate + H(+). Adds a GMP to the 5'-end of tRNA(His) after transcription and RNase P cleavage. This step is essential for proper recognition of the tRNA and for the fidelity of protein synthesis. Also functions as a guanyl-nucleotide exchange factor/GEF for the MFN1 and MFN2 mitofusins thereby regulating mitochondrial fusion. By regulating both mitochondrial dynamics and bioenergetic function, it contributes to cell survival following oxidative stress. This chain is Probable tRNA(His) guanylyltransferase (Thg1l), found in Mus musculus (Mouse).